A 346-amino-acid chain; its full sequence is PhoH-like protein (346 aa).

142-149 serves as a coordination point for ATP; it reads GPAGTGKT.

The protein belongs to the PhoH family.

The protein resides in the cytoplasm. The chain is PhoH-like protein (ybeZ) from Escherichia coli O157:H7.